Consider the following 56-residue polypeptide: Keratin-associated protein 20-1 (56 aa).

Belongs to the KRTAP type 20 family. Interacts with hair keratins.

Its function is as follows. In the hair cortex, hair keratin intermediate filaments are embedded in an interfilamentous matrix, consisting of hair keratin-associated proteins (KRTAP), which are essential for the formation of a rigid and resistant hair shaft through their extensive disulfide bond cross-linking with abundant cysteine residues of hair keratins. The matrix proteins include the high-sulfur and high-glycine-tyrosine keratins. This chain is Keratin-associated protein 20-1 (KRTAP20-1), found in Homo sapiens (Human).